Here is a 339-residue protein sequence, read N- to C-terminus: Heat-inducible transcription repressor HrcA (339 aa).

It belongs to the HrcA family.

Its function is as follows. Negative regulator of class I heat shock genes (grpE-dnaK-dnaJ and groELS operons). Prevents heat-shock induction of these operons. This chain is Heat-inducible transcription repressor HrcA, found in Clostridium perfringens (strain ATCC 13124 / DSM 756 / JCM 1290 / NCIMB 6125 / NCTC 8237 / Type A).